A 226-amino-acid chain; its full sequence is Triosephosphate isomerase (226 aa).

12-14 (NFK) contributes to the substrate binding site. The Electrophile role is filled by histidine 96. The active-site Proton acceptor is glutamate 144. Residues isoleucine 149, glycine 184, and 205–206 (AS) contribute to the substrate site.

The protein belongs to the triosephosphate isomerase family. Homotetramer; dimer of dimers.

The protein resides in the cytoplasm. The enzyme catalyses D-glyceraldehyde 3-phosphate = dihydroxyacetone phosphate. It participates in carbohydrate biosynthesis; gluconeogenesis. It functions in the pathway carbohydrate degradation; glycolysis; D-glyceraldehyde 3-phosphate from glycerone phosphate: step 1/1. Functionally, involved in the gluconeogenesis. Catalyzes stereospecifically the conversion of dihydroxyacetone phosphate (DHAP) to D-glyceraldehyde-3-phosphate (G3P). This is Triosephosphate isomerase from Thermococcus kodakarensis (strain ATCC BAA-918 / JCM 12380 / KOD1) (Pyrococcus kodakaraensis (strain KOD1)).